Consider the following 510-residue polypeptide: Cytochrome P450 11B2, mitochondrial (510 aa).

A mitochondrion-targeting transit peptide spans M1–L34. F391 provides a ligand contact to 21-hydroxyprogesterone. Position 457 (C457) interacts with heme.

Belongs to the cytochrome P450 family. Requires heme as cofactor. As to expression, adrenal cortex.

The protein resides in the mitochondrion inner membrane. It catalyses the reaction a steroid + 2 reduced [adrenodoxin] + O2 + 2 H(+) = an 11beta-hydroxysteroid + 2 oxidized [adrenodoxin] + H2O. The enzyme catalyses 21-hydroxyprogesterone + 2 reduced [adrenodoxin] + O2 + 2 H(+) = corticosterone + 2 oxidized [adrenodoxin] + H2O. The catalysed reaction is corticosterone + 2 reduced [adrenodoxin] + O2 + 2 H(+) = 18-hydroxycorticosterone + 2 oxidized [adrenodoxin] + H2O. It carries out the reaction 18-hydroxycorticosterone + 2 reduced [adrenodoxin] + O2 + 2 H(+) = aldosterone + 2 oxidized [adrenodoxin] + 2 H2O. It catalyses the reaction 11-deoxycortisol + 2 reduced [adrenodoxin] + O2 + 2 H(+) = cortisol + 2 oxidized [adrenodoxin] + H2O. The enzyme catalyses cortisol + 2 reduced [adrenodoxin] + O2 + 2 H(+) = 18-hydroxycortisol + 2 oxidized [adrenodoxin] + H2O. The catalysed reaction is 21-hydroxyprogesterone + 2 reduced [adrenodoxin] + O2 + 2 H(+) = 18-hydroxy-11-deoxycorticosterone + 2 oxidized [adrenodoxin] + H2O. It carries out the reaction 18-hydroxycortisol + 2 reduced [adrenodoxin] + O2 + 2 H(+) = 18-oxocortisol + 2 oxidized [adrenodoxin] + 2 H2O. The protein operates within steroid biosynthesis. A cytochrome P450 monooxygenase that catalyzes the biosynthesis of aldosterone, the main mineralocorticoid responsible for salt and water homeostasis. Catalyzes three sequential oxidative reactions of 11-deoxycorticosterone (21-hydroxyprogesterone), namely 11-beta hydroxylation, followed by two successive oxidations at C18 yielding 18-hydroxy and then 18-oxo intermediates (that do not leave the enzyme active site during the consecutive hydroxylation reactions), and end with the formation of aldosterone. Can also produce 18-hydroxycortisol and 18-oxocortisol, derived from successive oxidations of cortisol at C18, normally found at very low levels, but significantly increased in primary aldosteronism, the most common form of secondary hypertension. Mechanistically, uses molecular oxygen inserting one oxygen atom into a substrate and reducing the second into a water molecule. Two electrons are provided by NADPH via a two-protein mitochondrial transfer system comprising flavoprotein FDXR (adrenodoxin/ferredoxin reductase) and nonheme iron-sulfur protein FDX1 or FDX2 (adrenodoxin/ferredoxin). Could also be involved in the androgen metabolic pathway. The polypeptide is Cytochrome P450 11B2, mitochondrial (Cyp11b2) (Rattus norvegicus (Rat)).